The primary structure comprises 493 residues: MSFKDLRSFISHLEANGELKRISHPVDPHLEMTEIADRVLRAKGPALLFENPVGNEMPVLANLFGTPKRVAMALGKEDPLALREVGELLAFLKEPEPPRGFKDAISKIPMFKQALNMPPKTVRNAPCQEVIKTGSDVDLTKLPIQHCWPGDVAPLVTWGLTITKGPRQKRQNLGIYRQQLLDKDKLIMRWLDHRGGALDFKDFKEKFPGERYPVVVALGADPVTILGAVTPVPDSMSEYAFAGLLRGERTDVCKAISCDLEVPATSEIILEGYIDPEEMAEEGPYGDHTGYYNETDKFPVFTVTHITHRKDAIYHSTYTGRPPDEPAMLGVALNEIFVPILRKQYPEIIDFYLPPEGCSYRMAVISIRKEYPGHAKRVMMGAWSFLRQFMYTKFIIIVDEDVNCRDWNDVIWAITTRMDPKRDTVMIENTPIDYLDFASPVAGLGSKMGMDATNKWEGETDREWGTPIVMDEAVKQRIDTIWDDLGIDDAPTL.

Asparagine 172 serves as a coordination point for Mn(2+). Residues 175-177 (IYR), 189-191 (RWL), and 194-195 (RG) contribute to the prenylated FMN site. Position 238 (glutamate 238) interacts with Mn(2+). Aspartate 287 serves as the catalytic Proton donor.

The protein belongs to the UbiD family. In terms of assembly, homohexamer. Prenylated FMN is required as a cofactor. Requires Mn(2+) as cofactor.

It is found in the cell membrane. The catalysed reaction is a 4-hydroxy-3-(all-trans-polyprenyl)benzoate + H(+) = a 2-(all-trans-polyprenyl)phenol + CO2. The protein operates within cofactor biosynthesis; ubiquinone biosynthesis. Functionally, catalyzes the decarboxylation of 3-octaprenyl-4-hydroxy benzoate to 2-octaprenylphenol, an intermediate step in ubiquinone biosynthesis. The polypeptide is 3-octaprenyl-4-hydroxybenzoate carboxy-lyase (Shewanella sediminis (strain HAW-EB3)).